The primary structure comprises 542 residues: Protein NODULATION SIGNALING PATHWAY 1 (542 aa).

The tract at residues 73–150 (TSTTSLEPCG…SNCNSGNSKE (78 aa)) is disordered. The span at 92–103 (LPKKRNATDESS) shows a compositional bias: basic and acidic residues. The span at 136-148 (AKANGSNCNSGNS) shows a compositional bias: low complexity. Residues 145-532 (SGNSKEGRWA…QPVSFCSLWK (388 aa)) enclose the GRAS domain. The segment at 152–214 (RWAEQLLNPC…HLSSSSSSPT (63 aa)) is leucine repeat I (LRI). The tract at residues 233-332 (LLKFYEVSPW…GYNYYPRLLG (100 aa)) is VHIID. The VHIID motif lies at 269–273 (LHILD). A leucine repeat II (LRII) region spans residues 333 to 357 (YAQSININLQINRIENHSLQTLNAQ). Residues 367-452 (LIVCAQFRLH…RESDERRVME (86 aa)) form a PFYRE region. The segment at 455-532 (AAKALTNQRE…QPVSFCSLWK (78 aa)) is SAW.

It belongs to the GRAS family. In terms of tissue distribution, highly expressed in roots.

The protein resides in the nucleus. Functionally, transcriptional regulator essential for Nod-factor-induced gene expression. Acts downstream of calcium spiking and a calcium/calmodulin-dependent protein kinase required for activation of early nodulation gene expression. Acts as a common symbiosis gene that positively contributes to the early steps of the arbuscular mycorrhizal fungus and rhizobial infection processes in roots. Transcription factor involved in the positive regulation of the beta-carotene isomerase D27, which participates in a pathway leading to biosynthesis of strigolactones in roots. This Lotus japonicus (Lotus corniculatus var. japonicus) protein is Protein NODULATION SIGNALING PATHWAY 1.